The chain runs to 965 residues: Aminopeptidase N (965 aa).

The Cytoplasmic portion of the chain corresponds to M1–S8. Residues K9–V32 traverse the membrane as a helical; Signal-anchor for type II membrane protein segment. The segment at Y33–S65 is cytosolic Ser/Thr-rich junction. The Extracellular portion of the chain corresponds to Y33–S965. The segment at N40–S65 is disordered. Low complexity predominate over residues G44–T61. The tract at residues K66–S965 is metalloprotease. N125 is a glycosylation site (N-linked (GlcNAc...) asparagine). Sulfotyrosine is present on Y173. 3 N-linked (GlcNAc...) asparagine glycosylation sites follow: N231, N260, and N316. Residue G349–N353 participates in substrate binding. H385 contacts Zn(2+). Residue E386 is the Proton acceptor of the active site. Positions 389 and 408 each coordinate Zn(2+). The residue at position 416 (Y416) is a Sulfotyrosine. N-linked (GlcNAc...) asparagine glycans are attached at residues N508, N569, N624, N680, N734, and N738. 2 cysteine pairs are disulfide-bonded: C760–C767 and C797–C833.

The protein belongs to the peptidase M1 family. In terms of assembly, homodimer. Interacts with SLC6A19. The cofactor is Zn(2+). In terms of processing, sulfated. N- and O-glycosylated. Post-translationally, may undergo proteolysis and give rise to a soluble form.

Its subcellular location is the cell membrane. The catalysed reaction is Release of an N-terminal amino acid, Xaa-|-Yaa- from a peptide, amide or arylamide. Xaa is preferably Ala, but may be most amino acids including Pro (slow action). When a terminal hydrophobic residue is followed by a prolyl residue, the two may be released as an intact Xaa-Pro dipeptide.. Broad specificity aminopeptidase which plays a role in the final digestion of peptides generated from hydrolysis of proteins by gastric and pancreatic proteases. Also involved in the processing of various peptides including peptide hormones, such as angiotensin III and IV, neuropeptides, and chemokines. May also be involved the cleavage of peptides bound to major histocompatibility complex class II molecules of antigen presenting cells. May have a role in angiogenesis and promote cholesterol crystallization. May have a role in amino acid transport by acting as binding partner of amino acid transporter SLC6A19 and regulating its activity. The polypeptide is Aminopeptidase N (ANPEP) (Bos taurus (Bovine)).